Reading from the N-terminus, the 142-residue chain is Large ribosomal subunit protein uL13 (142 aa).

The protein belongs to the universal ribosomal protein uL13 family. As to quaternary structure, part of the 50S ribosomal subunit.

Functionally, this protein is one of the early assembly proteins of the 50S ribosomal subunit, although it is not seen to bind rRNA by itself. It is important during the early stages of 50S assembly. The sequence is that of Large ribosomal subunit protein uL13 from Vibrio atlanticus (strain LGP32) (Vibrio splendidus (strain Mel32)).